Consider the following 201-residue polypeptide: Holliday junction branch migration complex subunit RuvA (201 aa).

The segment at 1 to 64 (MIGRLHGKII…EDAHLLFGFA (64 aa)) is domain I. The interval 65–143 (QKQDRTLFRE…GVAQSDFFEE (79 aa)) is domain II. The flexible linker stretch occupies residues 144 to 154 (HSVETIVATHS). The segment at 154 to 201 (SHDPADEARDALVALGYKLADAEKMIKKVNKAGATSEQLIREALKASL) is domain III.

This sequence belongs to the RuvA family. Homotetramer. Forms an RuvA(8)-RuvB(12)-Holliday junction (HJ) complex. HJ DNA is sandwiched between 2 RuvA tetramers; dsDNA enters through RuvA and exits via RuvB. An RuvB hexamer assembles on each DNA strand where it exits the tetramer. Each RuvB hexamer is contacted by two RuvA subunits (via domain III) on 2 adjacent RuvB subunits; this complex drives branch migration. In the full resolvosome a probable DNA-RuvA(4)-RuvB(12)-RuvC(2) complex forms which resolves the HJ.

Its subcellular location is the cytoplasm. In terms of biological role, the RuvA-RuvB-RuvC complex processes Holliday junction (HJ) DNA during genetic recombination and DNA repair, while the RuvA-RuvB complex plays an important role in the rescue of blocked DNA replication forks via replication fork reversal (RFR). RuvA specifically binds to HJ cruciform DNA, conferring on it an open structure. The RuvB hexamer acts as an ATP-dependent pump, pulling dsDNA into and through the RuvAB complex. HJ branch migration allows RuvC to scan DNA until it finds its consensus sequence, where it cleaves and resolves the cruciform DNA. In Actinobacillus pleuropneumoniae serotype 7 (strain AP76), this protein is Holliday junction branch migration complex subunit RuvA.